The following is a 556-amino-acid chain: Formate--tetrahydrofolate ligase (556 aa).

65–72 (TPAGEGKS) contributes to the ATP binding site.

Belongs to the formate--tetrahydrofolate ligase family.

It catalyses the reaction (6S)-5,6,7,8-tetrahydrofolate + formate + ATP = (6R)-10-formyltetrahydrofolate + ADP + phosphate. The protein operates within one-carbon metabolism; tetrahydrofolate interconversion. In Streptococcus thermophilus (strain ATCC BAA-491 / LMD-9), this protein is Formate--tetrahydrofolate ligase.